We begin with the raw amino-acid sequence, 179 residues long: Large ribosomal subunit protein uL6 (179 aa).

The protein belongs to the universal ribosomal protein uL6 family. In terms of assembly, part of the 50S ribosomal subunit.

Its function is as follows. This protein binds to the 23S rRNA, and is important in its secondary structure. It is located near the subunit interface in the base of the L7/L12 stalk, and near the tRNA binding site of the peptidyltransferase center. The polypeptide is Large ribosomal subunit protein uL6 (Mycobacterium tuberculosis (strain ATCC 25618 / H37Rv)).